The chain runs to 264 residues: Thymidylate synthase (264 aa).

Arginine 21 is a dUMP binding site. Histidine 51 lines the (6R)-5,10-methylene-5,6,7,8-tetrahydrofolate pocket. 126 to 127 contributes to the dUMP binding site; the sequence is RR. Cysteine 146 acts as the Nucleophile in catalysis. DUMP-binding positions include 166–169, asparagine 177, and 207–209; these read RSCD and HLY. Aspartate 169 contributes to the (6R)-5,10-methylene-5,6,7,8-tetrahydrofolate binding site. Alanine 263 contacts (6R)-5,10-methylene-5,6,7,8-tetrahydrofolate.

Belongs to the thymidylate synthase family. Bacterial-type ThyA subfamily. In terms of assembly, homodimer.

It localises to the cytoplasm. The catalysed reaction is dUMP + (6R)-5,10-methylene-5,6,7,8-tetrahydrofolate = 7,8-dihydrofolate + dTMP. It functions in the pathway pyrimidine metabolism; dTTP biosynthesis. Its function is as follows. Catalyzes the reductive methylation of 2'-deoxyuridine-5'-monophosphate (dUMP) to 2'-deoxythymidine-5'-monophosphate (dTMP) while utilizing 5,10-methylenetetrahydrofolate (mTHF) as the methyl donor and reductant in the reaction, yielding dihydrofolate (DHF) as a by-product. This enzymatic reaction provides an intracellular de novo source of dTMP, an essential precursor for DNA biosynthesis. The polypeptide is Thymidylate synthase (Xenorhabdus nematophila (strain ATCC 19061 / DSM 3370 / CCUG 14189 / LMG 1036 / NCIMB 9965 / AN6)).